The chain runs to 214 residues: Small ribosomal subunit protein uS5 (214 aa).

The 64-residue stretch at 55–118 (LKYERLDVGI…RNAKLNITPV (64 aa)) folds into the S5 DRBM domain.

This sequence belongs to the universal ribosomal protein uS5 family. Part of the 30S ribosomal subunit. Contacts protein S4.

With S4 and S12 plays an important role in translational accuracy. The protein is Small ribosomal subunit protein uS5 of Staphylothermus marinus (strain ATCC 43588 / DSM 3639 / JCM 9404 / F1).